The chain runs to 217 residues: Small ribosomal subunit protein uS3 (217 aa).

A KH type-2 domain is found at 38-106; sequence IRKFIDNELK…KVHINVIEIK (69 aa).

The protein belongs to the universal ribosomal protein uS3 family. As to quaternary structure, part of the 30S ribosomal subunit. Forms a tight complex with proteins S10 and S14.

Its function is as follows. Binds the lower part of the 30S subunit head. Binds mRNA in the 70S ribosome, positioning it for translation. The polypeptide is Small ribosomal subunit protein uS3 (rpsC) (Staphylococcus aureus (strain COL)).